A 494-amino-acid chain; its full sequence is GTPase Der (494 aa).

EngA-type G domains follow at residues 2–164 (KKIA…PEED) and 235–407 (IKIS…KNYS). GTP is bound by residues 8 to 15 (GRPNVGKS), 55 to 59 (DTGGL), 116 to 119 (NKID), 241 to 248 (GRTNVGKS), 288 to 292 (DTAGL), and 352 to 355 (NKWD). A KH-like domain is found at 408 to 492 (QHIKTSELNV…PVLFKAKKRG (85 aa)).

This sequence belongs to the TRAFAC class TrmE-Era-EngA-EngB-Septin-like GTPase superfamily. EngA (Der) GTPase family. As to quaternary structure, associates with the 50S ribosomal subunit.

Its function is as follows. GTPase that plays an essential role in the late steps of ribosome biogenesis. In Sulfurimonas denitrificans (strain ATCC 33889 / DSM 1251) (Thiomicrospira denitrificans (strain ATCC 33889 / DSM 1251)), this protein is GTPase Der.